The following is a 356-amino-acid chain: DNA polymerase IV (356 aa).

The 182-residue stretch at 6–187 (IIHIDMDYFF…LDIGDFPGVG (182 aa)) folds into the UmuC domain. Mg(2+) is bound by residues aspartate 10 and aspartate 105. Glutamate 106 is a catalytic residue.

Belongs to the DNA polymerase type-Y family. In terms of assembly, monomer. Mg(2+) is required as a cofactor.

The protein localises to the cytoplasm. The enzyme catalyses DNA(n) + a 2'-deoxyribonucleoside 5'-triphosphate = DNA(n+1) + diphosphate. In terms of biological role, poorly processive, error-prone DNA polymerase involved in untargeted mutagenesis. Copies undamaged DNA at stalled replication forks, which arise in vivo from mismatched or misaligned primer ends. These misaligned primers can be extended by PolIV. Exhibits no 3'-5' exonuclease (proofreading) activity. May be involved in translesional synthesis, in conjunction with the beta clamp from PolIII. In Staphylococcus aureus (strain MRSA252), this protein is DNA polymerase IV.